The primary structure comprises 212 residues: MATIFRTWSYQYPWVYALVSRLATLNVGGEERFHQLPLENLAISPGQKVLDLCCGGGQATVYLAQSGATVVGLDASPKALGRAKINVPQATYVQGLAEDLPFGEGEFDLVHTSVALHEMTPAQLQSIISGVHRVLKPGGIFALVDLHRPSNWLFWPPLAIFMGLFETETAWQLINTDLGSLLDQAGFTVVRKHLYAGGSLQVIQARANKTVN.

This sequence belongs to the methyltransferase superfamily.

This is an uncharacterized protein from Synechocystis sp. (strain ATCC 27184 / PCC 6803 / Kazusa).